The primary structure comprises 463 residues: MVRGLVNFTGLSTRLLNICVDSLCKFRKLEKAESLIIDGIRLGVDPDVVTYNTLISGYCRFVGIEEAYAVTRRMRDAGIRPDVATYNSLIAGAARRLMLDHVLYLFDEMLEWGIYPDLWSYNTLMCCYFKLGKHEEAFRVLYKDLQLAGLNPGPDTYNVLLDALCKCGYIDNALELFKEMQSRFKPELMTYNILINGLCKSRRVGTAKWMLTELKKSGYTPNAVTYTTILKLYFKTRRIRRGLQLFLEMKREGYTYDGYAYFAVVSALIKTGRTKEAYEYMQELVRKGRRHDIVSYNTLLNLYFKDGNLDAVDDLLGEIERRGMKADEYTHTIIVNGLLRTGQTRRAEEHFVSMGEMGIGLNLVTCNCLVDGLCKAGHVDRAMRYFESMEVKDEYTYTSVVHNLCKDMRFVCASKLLLSCYNKGIKIPTSARRAVLSGLRMSGCYGEARKAKAEMKLTLVGNS.

PPR repeat units follow at residues 12-46 (STRL…GVDP), 47-81 (DVVT…GIRP), 82-116 (DVAT…GIYP), 117-152 (DLWS…GLNP), 153-186 (GPDT…RFKP), 187-221 (ELMT…GYTP), 222-256 (NAVT…GYTY), 257-291 (DGYA…GRRH), 292-326 (DIVS…GMKA), 327-361 (DEYT…GIGL), 362-392 (NLVT…MEVK), and 393-427 (DEYT…GIKI).

It belongs to the PPR family. P subfamily.

The polypeptide is Putative pentatricopeptide repeat-containing protein At4g17915 (Arabidopsis thaliana (Mouse-ear cress)).